The chain runs to 408 residues: SERPINE1 mRNA-binding protein 1 (408 aa).

S25 bears the Phosphoserine mark. Disordered stretches follow at residues A33 to E292 and S328 to A408. Over residues A51 to K68 the composition is skewed to low complexity. N6-acetyllysine; alternate is present on K52. A Glycyl lysine isopeptide (Lys-Gly) (interchain with G-Cter in SUMO1); alternate cross-link involves residue K52. K68 carries the N6-acetyllysine modification. 3 stretches are compositionally biased toward basic and acidic residues: residues L70–N80, V89–D114, and K122–I162. K102 is covalently cross-linked (Glycyl lysine isopeptide (Lys-Gly) (interchain with G-Cter in SUMO1); alternate). Residue K102 forms a Glycyl lysine isopeptide (Lys-Gly) (interchain with G-Cter in SUMO2); alternate linkage. K122 and K140 each carry N6-acetyllysine. Residues G164–G182 are compositionally biased toward gly residues. Omega-N-methylarginine occurs at positions 165 and 188. A compositionally biased stretch (basic and acidic residues) spans D183–S199. S197 bears the Phosphoserine mark. S199 carries the phosphoserine; by MTOR modification. Residues S203, S205, and S208 each carry the phosphoserine modification. N6-acetyllysine; alternate is present on K211. A Glycyl lysine isopeptide (Lys-Gly) (interchain with G-Cter in SUMO2); alternate cross-link involves residue K211. R216 carries the omega-N-methylarginine modification. S221 is subject to Phosphoserine. Residue H222 forms a Glycyl lysine isopeptide (Lys-Gly) (interchain with G-Cter in SUMO2) linkage. A Phosphothreonine; by MTOR modification is found at T226. K228 is covalently cross-linked (Glycyl lysine isopeptide (Lys-Gly) (interchain with G-Cter in SUMO1); alternate). K228 is covalently cross-linked (Glycyl lysine isopeptide (Lys-Gly) (interchain with G-Cter in SUMO2); alternate). Residue K228 forms a Glycyl lysine isopeptide (Lys-Gly) (interchain with G-Cter in SUMO2) linkage. Phosphoserine occurs at positions 231, 234, and 237. A Phosphothreonine modification is found at S234. The residue at position 240 (K240) is a Phosphothreonine. A compositionally biased stretch (polar residues) spans K240–N253. Over residues G261 to N275 the composition is skewed to basic and acidic residues. A Glycyl lysine isopeptide (Lys-Gly) (interchain with G-Cter in SUMO1); alternate cross-link involves residue K281. K281 is covalently cross-linked (Glycyl lysine isopeptide (Lys-Gly) (interchain with G-Cter in SUMO2); alternate). Basic and acidic residues-rich tracts occupy residues E282–E292 and S328–H342. An N6-acetyllysine modification is found at K329. S330 carries the phosphoserine modification. Over residues G363–G372 the composition is skewed to gly residues. 3 positions are modified to omega-N-methylarginine: R364, R367, and R370. Phosphoserine is present on residues S392 and S394.

Belongs to the SERBP1-HABP4 family. In terms of assembly, associates with mature 80S ribosomes. Interacts with EEF2/eEF2; interaction sequesters EEF2/eEF2 at the A-site of the ribosome, thereby blocking the interaction sites of the mRNA-tRNA complex, promoting ribosome stabilization and hibernation. Interacts with SPIN1. Interacts with CHD3 and TDRD3. Interacts with ZDHHC17 (via ANK repeats). Post-translationally, phosphorylation by MTOR inhibits SERBP1 and relieves ribosome hibernation. As to expression, expressed at high level in the heart, skeletal muscle and kidney, and at low levels in placenta, liver and brain.

It localises to the cytoplasm. The protein localises to the nucleus. The protein resides in the perinuclear region. Ribosome-binding protein that promotes ribosome hibernation, a process during which ribosomes are stabilized in an inactive state and preserved from proteasomal degradation. Acts via its association with EEF2/eEF2 factor, sequestering EEF2/eEF2 at the A-site of the ribosome and promoting ribosome stabilization and storage in an inactive state. May also play a role in the regulation of mRNA stability: binds to the 3'-most 134 nt of the SERPINE1/PAI1 mRNA, a region which confers cyclic nucleotide regulation of message decay. Seems to play a role in PML-nuclear bodies formation. The protein is SERPINE1 mRNA-binding protein 1 of Homo sapiens (Human).